Consider the following 116-residue polypeptide: uncharacterized protein (116 aa).

Residues 77-116 (SATSHYPKADDPQRFARSVSRGPSRVRRPARNSASRPVRR) are disordered.

This is an uncharacterized protein from Frog virus 3 (isolate Goorha) (FV-3).